A 319-amino-acid polypeptide reads, in one-letter code: Annexin A5 (319 aa).

N-acetylalanine is present on Ala-2. 4 Annexin repeats span residues 13–84, 85–156, 168–240, and 244–315; these read FDGR…AMMK, PSRL…VLLQ, AQVE…AVVK, and SIPA…LLCG. Lys-27 is covalently cross-linked (Glycyl lysine isopeptide (Lys-Gly) (interchain with G-Cter in SUMO1); alternate). Lys-27 participates in a covalent cross-link: Glycyl lysine isopeptide (Lys-Gly) (interchain with G-Cter in SUMO2); alternate. Ser-35 carries the post-translational modification Phosphoserine. 5 positions are modified to N6-acetyllysine: Lys-68, Lys-74, Lys-77, Lys-95, and Lys-99. The residue at position 288 (Lys-288) is an N6-succinyllysine. A [IL]-x-C-x-x-[DE] motif motif is present at residues 312 to 318; sequence LLCGGED.

Belongs to the annexin family. Monomer. Binds ATRX and EIF5B. Post-translationally, S-nitrosylation is induced by interferon-gamma and oxidatively-modified low-densitity lipoprotein (LDL(ox)) possibly implicating the iNOS-S100A8/9 transnitrosylase complex.

In terms of biological role, this protein is an anticoagulant protein that acts as an indirect inhibitor of the thromboplastin-specific complex, which is involved in the blood coagulation cascade. This Mus musculus (Mouse) protein is Annexin A5 (Anxa5).